The primary structure comprises 217 residues: Protein-L-isoaspartate O-methyltransferase (217 aa).

The active site involves Ser-59.

It belongs to the methyltransferase superfamily. L-isoaspartyl/D-aspartyl protein methyltransferase family.

It is found in the cytoplasm. The catalysed reaction is [protein]-L-isoaspartate + S-adenosyl-L-methionine = [protein]-L-isoaspartate alpha-methyl ester + S-adenosyl-L-homocysteine. Its function is as follows. Catalyzes the methyl esterification of L-isoaspartyl residues in peptides and proteins that result from spontaneous decomposition of normal L-aspartyl and L-asparaginyl residues. It plays a role in the repair and/or degradation of damaged proteins. This is Protein-L-isoaspartate O-methyltransferase (pcm) from Methanothermobacter thermautotrophicus (strain ATCC 29096 / DSM 1053 / JCM 10044 / NBRC 100330 / Delta H) (Methanobacterium thermoautotrophicum).